Here is a 24-residue protein sequence, read N- to C-terminus: Cryptonin (24 aa).

Antimicrobial peptide, active against the Gram-negative bacterium E.coli K12-594 (MIC=3.12 ug/ml), the Gram-positive bacteria B.subtilis KCTC 3086 (MIC=3.12 ug/ml), S.aureus KCTC 1928 (MIC=25 ug/ml) and M.luteus KCTC 3063 (MIC=1.56 ug/ml), the antibiotic resistant bacteria methicillin-resistant S.aureus (MRSA) (MIC=25 ug/ml) and vancomycin-resistant Enterococci (VRE) (MIC=25 ug/ml), and the fungi C.albicans KCTC 7965 (MIC=50 ug/ml) and C.tropicalis KCTC 1925 (MIC=3.12 ug/ml). Has very low hemolytic activity on rat erythrocytes. The polypeptide is Cryptonin (Cryptotympana dubia (Korean horse cicada)).